The sequence spans 191 residues: GDP-mannose pyrophosphatase (191 aa).

GDP-alpha-D-mannose contacts are provided by residues Tyr-17, 38–40, Arg-67, and 85–87; these read KRE and AGL. Residues 43–180 form the Nudix hydrolase domain; that stretch reads DRGNGATILL…EIRDGKTVLL (138 aa). Mg(2+) contacts are provided by Ala-85, Glu-100, and Glu-104. The short motif at 86 to 106 is the Nudix box element; that stretch reads GLLDNDEPEVCIRKEAIEETG. GDP-alpha-D-mannose is bound by residues Glu-104, Glu-127, 150–151, and Lys-176; that span reads DE. Residue Glu-151 coordinates Mg(2+).

This sequence belongs to the Nudix hydrolase family. NudK subfamily. Homodimer. It depends on Mg(2+) as a cofactor.

It catalyses the reaction GDP-alpha-D-mannose + H2O = alpha-D-mannose 1-phosphate + GMP + 2 H(+). Its function is as follows. Nucleoside diphosphate sugar hydrolase that hydrolyzes GDP-mannose as its preferred substrate, yielding GMP and mannose-1-phosphate. This chain is GDP-mannose pyrophosphatase (nudK), found in Salmonella typhi.